Consider the following 299-residue polypeptide: MKQFLITGGTGMVGSQLVNKLKNRDVHITILTRSDKQSDDPKISYVNWSKDGWMSQVPDIDVVVNLAGATLNKRWTPSYKQLIMTSRIQSTQSLVDLFSQREHKPEVLFNASAMGYYPPSLYHTYTEKYQTHPFDFLSDVVYQWERFAKRFESFGTRVVLGRFSMILSNDGGALQTMKLPYKFFVGGKLGSGFQWYSWIHINDLVRAILFTIDNPNAKGPFNMAAPIAERQNLFGYTLARVMHRPHETWVPSFLMRLALGEMSTVVLDTQKVLPNKLDALGFTFNYSNLKIAFEDLIDA.

Belongs to the NAD(P)-dependent epimerase/dehydratase family. SDR39U1 subfamily.

The chain is Epimerase family protein SH2119 from Staphylococcus haemolyticus (strain JCSC1435).